Reading from the N-terminus, the 786-residue chain is Leucine-rich repeat extensin-like protein 2 (786 aa).

A signal peptide spans 1–28 (MLLFPSTSLRLFFFLFLLFSSCFLQIRG). Residues asparagine 73 and asparagine 79 are each glycosylated (N-linked (GlcNAc...) asparagine). LRR repeat units lie at residues 100 to 124 (TRVVAGIDLNHADMAGYLPRELGLL), 125 to 147 (TDLALFHLNSNRFCGEVPLTFKH), 149 to 172 (KLLFELDLSNNRFVGKFPNVVLSL), 173 to 196 (PSLKFLDLRYNEFEGSIPSKLFDK), 198 to 219 (LDAIFLNHNRFMFGIPENMGNS), 221 to 243 (VSALVLADNDLGGCIPGSIGLMG), 244 to 267 (KTLNEIILSNDNLTGCLPPQIGNL), 268 to 291 (KNVTVFDISFNRLSGPLPSSIGNM), and 292 to 315 (KSLEQLNVANNRFTGVIPSSICQL). N-linked (GlcNAc...) asparagine glycans are attached at residues asparagine 255 and asparagine 269. Asparagine 320 and asparagine 346 each carry an N-linked (GlcNAc...) asparagine glycan. Disordered regions lie at residues 352 to 372 (IDGKEDQRSSKECSSPASRSV), 390 to 589 (FKMS…YYAV), 624 to 645 (PPVYYSPVTQSPPPPPPVYYPP), and 694 to 786 (PPPS…IPYY). Basic and acidic residues predominate over residues 353-362 (DGKEDQRSSK). The segment at 384 to 786 (SPPPPSFKMS…SPPPPSIPYY (403 aa)) is contains the Ser-Pro(4) repeats. Composition is skewed to pro residues over residues 460–477 (YPPPPPPPEYEPSPPPPS), 487–542 (YPPP…PPPK), and 566–589 (SPPPPTYYATQSPPPPPPPTYYAV). 4 stretches are compositionally biased toward pro residues: residues 694 to 713 (PPPSPVYYPPVTQSPPPPST), 720 to 737 (PASPNQSPPPEYQSPPPK), 752 to 769 (PTPPSLPPPYYEDTPLPP), and 777 to 786 (SPPPPSIPYY).

Post-translationally, hydroxylated on proline residues in the S-P-P-P-P repeat. O-glycosylated on hydroxyprolines. As to expression, mostly expressed in roots, also present in stems at low levels. In roots, confined to differentiation zones, the collet, and meristematic cells of tips.

It localises to the secreted. The protein resides in the cell wall. Functionally, modulates cell morphogenesis by regulating cell wall formation and assembly, and/or growth polarization. Together with LRX2, component of the extracellular mechanism regulating root hair morphogenesis and elongation. This Arabidopsis thaliana (Mouse-ear cress) protein is Leucine-rich repeat extensin-like protein 2 (LRX2).